The chain runs to 95 residues: Acylphosphatase (95 aa).

The region spanning 5–93 is the Acylphosphatase-like domain; it reads RAHLFIRGKV…GEFQDFRILP (89 aa). Residues R20 and N38 contribute to the active site.

Belongs to the acylphosphatase family.

It carries out the reaction an acyl phosphate + H2O = a carboxylate + phosphate + H(+). The polypeptide is Acylphosphatase (acyP) (Pyrobaculum arsenaticum (strain DSM 13514 / JCM 11321 / PZ6)).